Consider the following 187-residue polypeptide: Large ribosomal subunit protein bL17 (187 aa).

The interval 122 to 187 (PKVRSSRTST…EADAAEKSDK (66 aa)) is disordered. A compositionally biased stretch (low complexity) spans 127–144 (SRTSTATAPAAAAPAAEA). Composition is skewed to acidic residues over residues 145 to 157 (PAEE…EETD) and 165 to 180 (TPAE…VEAD).

Belongs to the bacterial ribosomal protein bL17 family. Part of the 50S ribosomal subunit. Contacts protein L32.

The sequence is that of Large ribosomal subunit protein bL17 from Clavibacter michiganensis subsp. michiganensis (strain NCPPB 382).